Consider the following 390-residue polypeptide: 8-amino-7-oxononanoate synthase (390 aa).

Arginine 19 is a substrate binding site. Pyridoxal 5'-phosphate is bound at residue 106–107 (GY). Histidine 131 contributes to the substrate binding site. 3 residues coordinate pyridoxal 5'-phosphate: serine 176, histidine 204, and threonine 233. An N6-(pyridoxal phosphate)lysine modification is found at lysine 236. Residue threonine 350 participates in substrate binding.

Belongs to the class-II pyridoxal-phosphate-dependent aminotransferase family. BioF subfamily. Homodimer. Requires pyridoxal 5'-phosphate as cofactor.

The catalysed reaction is 6-carboxyhexanoyl-[ACP] + L-alanine + H(+) = (8S)-8-amino-7-oxononanoate + holo-[ACP] + CO2. Its pathway is cofactor biosynthesis; biotin biosynthesis. Catalyzes the decarboxylative condensation of pimeloyl-[acyl-carrier protein] and L-alanine to produce 8-amino-7-oxononanoate (AON), [acyl-carrier protein], and carbon dioxide. The polypeptide is 8-amino-7-oxononanoate synthase (Pseudomonas putida (strain W619)).